Reading from the N-terminus, the 1547-residue chain is Tubby-related protein 4 (1547 aa).

3 WD repeats span residues 80–119, 123–162, and 165–204; these read GHNS…WSVE, DRGA…HWSS, and NLES…LAHV. In terms of domain architecture, SOCS box spans 364-414; that stretch reads ALYVVRVEHRVSSLQLLCQQAIASTLREDKDVNKLTLPPRLCSYLSTAFIP. Residues 530 to 580 are disordered; that stretch reads SPKISRSSKSPKLPRISIEARKSPKLPRAAQEISRSPRLPMRKPSMGSPSL. Low complexity predominate over residues 533–546; that stretch reads ISRSSKSPKLPRIS. At Ser577 the chain carries Phosphoserine. Asymmetric dimethylarginine occurs at positions 949 and 954. Phosphoserine occurs at positions 1347 and 1378. The interval 1374–1414 is disordered; sequence SLISSPRLGREKKKVKSQKDQLKSKKLNKTNEFQDSSESEP. Residues 1436 to 1547 form a TUB region; sequence SKRSLRTASE…ALANVTQRLK (112 aa).

Belongs to the TUB family.

It is found in the cytoplasm. Its pathway is protein modification; protein ubiquitination. Its function is as follows. May be a substrate-recognition component of a SCF-like ECS (Elongin-Cullin-SOCS-box protein) E3 ubiquitin ligase complex which mediates the ubiquitination and subsequent proteasomal degradation of target proteins. This Mus musculus (Mouse) protein is Tubby-related protein 4 (Tulp4).